A 680-amino-acid chain; its full sequence is Structure-specific endonuclease subunit SLX4 (680 aa).

Disordered stretches follow at residues 15–92, 141–183, and 450–490; these read EVAK…EPVV, ESSS…STQQ, and LGSG…ATRL. The segment covering 22–33 has biased composition (acidic residues); that stretch reads DSDEPIIDEDDL. The span at 60-86 shows a compositional bias: basic and acidic residues; that stretch reads NNSKDTFKETPLELVDKEEAIEDKAPN. Basic residues predominate over residues 156-174; the sequence is LKSKKITKPKLTKTSKRTK. A compositionally biased stretch (polar residues) spans 473–490; it reads TVISRSPQSTRTPQATRL.

It belongs to the SLX4 family. As to quaternary structure, forms a heterodimer with SLX1. Phosphorylated in response to DNA damage.

It localises to the nucleus. Its function is as follows. Regulatory subunit of the SLX1-SLX4 structure-specific endonuclease that resolves DNA secondary structures generated during DNA repair and recombination. Has endonuclease activity towards branched DNA substrates, introducing single-strand cuts in duplex DNA close to junctions with ss-DNA. This is Structure-specific endonuclease subunit SLX4 from Vanderwaltozyma polyspora (strain ATCC 22028 / DSM 70294 / BCRC 21397 / CBS 2163 / NBRC 10782 / NRRL Y-8283 / UCD 57-17) (Kluyveromyces polysporus).